Consider the following 565-residue polypeptide: Pentatricopeptide repeat-containing protein At3g20730 (565 aa).

PPR repeat units follow at residues 12–46, 47–77, 78–112, 113–147, 148–178, 179–213, 214–248, 249–279, 280–315, 316–351, 352–382, 383–417, 418–448, and 454–484; these read SPSL…GFCS, NLQL…ISKR, DVVS…DVKA, NQFT…NCAG, NLIV…MKER, DLVS…GKKP, DCFT…GFGR, SSAL…TKKR, DLLS…KTKM, DEVV…QIRF, DVAL…MKEK, DVRS…RIKP, NDVT…MINK, and REEH…KEGI. The type E motif; degenerate stretch occupies residues 491–565; that stretch reads TWGAFLDACR…NKAPGYSLVY (75 aa).

Belongs to the PPR family. PCMP-E subfamily.

This Arabidopsis thaliana (Mouse-ear cress) protein is Pentatricopeptide repeat-containing protein At3g20730 (PCMP-E94).